Consider the following 103-residue polypeptide: Integration host factor subunit alpha (103 aa).

Residues 51–73 (FGNFQLRDKPQRPGRNPKTGEEI) form a disordered region.

It belongs to the bacterial histone-like protein family. As to quaternary structure, heterodimer of an alpha and a beta chain.

Its function is as follows. This protein is one of the two subunits of integration host factor, a specific DNA-binding protein that functions in genetic recombination as well as in transcriptional and translational control. The chain is Integration host factor subunit alpha from Azoarcus sp. (strain BH72).